A 323-amino-acid polypeptide reads, in one-letter code: MEILKSMIDPKIVMAIVISFIVASILGPIIIPLLHKLKFGQNIRQEGPKSHLKKAGTPTIGGLIFIFATIITMFIMVGNPTDEAMIALYSFVGFGFVGFLDDLLKIIKKKNEGLTSGQKMILLLIVSGFLTWYAYKYIGTSINIPFLNGQINFGLFYIPFVMFYFAGVTNAVNLTDGLDGLATSVTVLVTTFLGIISYNLGHISLAIFCVALAGALLAFLRFNAFPARVFMGDTGSLALGGAVAMVALILKMPLILVLIGIIYVIETLSVILQVASFKLTGKRIFKMAPIHHHFEQLGWSETKIVSVFSIITVVFCFIAFASL.

The next 9 helical transmembrane spans lie at 12–32, 58–78, 84–104, 120–140, 151–171, 177–197, 200–220, 229–250, and 303–323; these read IVMA…IIIP, PTIG…IMVG, AMIA…DDLL, MILL…YIGT, INFG…VTNA, GLDG…GIIS, LGHI…LAFL, VFMG…ALIL, and KIVS…FASL.

This sequence belongs to the glycosyltransferase 4 family. MraY subfamily. Mg(2+) serves as cofactor.

The protein localises to the cell membrane. It catalyses the reaction UDP-N-acetyl-alpha-D-muramoyl-L-alanyl-gamma-D-glutamyl-meso-2,6-diaminopimeloyl-D-alanyl-D-alanine + di-trans,octa-cis-undecaprenyl phosphate = di-trans,octa-cis-undecaprenyl diphospho-N-acetyl-alpha-D-muramoyl-L-alanyl-D-glutamyl-meso-2,6-diaminopimeloyl-D-alanyl-D-alanine + UMP. Its pathway is cell wall biogenesis; peptidoglycan biosynthesis. Functionally, catalyzes the initial step of the lipid cycle reactions in the biosynthesis of the cell wall peptidoglycan: transfers peptidoglycan precursor phospho-MurNAc-pentapeptide from UDP-MurNAc-pentapeptide onto the lipid carrier undecaprenyl phosphate, yielding undecaprenyl-pyrophosphoryl-MurNAc-pentapeptide, known as lipid I. In Clostridium perfringens (strain ATCC 13124 / DSM 756 / JCM 1290 / NCIMB 6125 / NCTC 8237 / Type A), this protein is Phospho-N-acetylmuramoyl-pentapeptide-transferase.